The chain runs to 56 residues: MATKGGRDKIKLESTAGTGHFYTTTKNKKTMPEKMSIIKFDPKARKHVEYKEMKLK.

Over residues 1–12 (MATKGGRDKIKL) the composition is skewed to basic and acidic residues. The segment at 1 to 24 (MATKGGRDKIKLESTAGTGHFYTT) is disordered. Polar residues predominate over residues 15–24 (TAGTGHFYTT).

It belongs to the bacterial ribosomal protein bL33 family.

This is Large ribosomal subunit protein bL33 from Paracidovorax citrulli (strain AAC00-1) (Acidovorax citrulli).